A 522-amino-acid chain; its full sequence is Glucose-1-phosphate adenylyltransferase large subunit 1, chloroplastic (522 aa).

The N-terminal 54 residues, 1–54 (MVVSADCRISLSAPSCIRSSSTGLTRHIKLGSFCNGELMGKKLNLSQLPNIRLR), are a transit peptide targeting the chloroplast. Ser-428 carries the phosphoserine modification.

It belongs to the bacterial/plant glucose-1-phosphate adenylyltransferase family. In terms of assembly, heterotetramer. As to expression, leaves.

It localises to the plastid. The protein resides in the chloroplast. The enzyme catalyses alpha-D-glucose 1-phosphate + ATP + H(+) = ADP-alpha-D-glucose + diphosphate. The protein operates within glycan biosynthesis; starch biosynthesis. Its activity is regulated as follows. Activated by 3'phosphoglycerate, inhibited by orthophosphate. Allosteric regulation. Its function is as follows. This protein plays a role in synthesis of starch. It catalyzes the synthesis of the activated glycosyl donor, ADP-glucose from Glc-1-P and ATP. This is Glucose-1-phosphate adenylyltransferase large subunit 1, chloroplastic (ADG2) from Arabidopsis thaliana (Mouse-ear cress).